The chain runs to 629 residues: Phosphomethylpyrimidine synthase (629 aa).

Substrate-binding positions include Asn-215, Met-244, Tyr-273, His-309, 329–331, 370–373, and Glu-409; these read SRG and DGLR. His-413 provides a ligand contact to Zn(2+). Tyr-436 is a substrate binding site. Residue His-477 participates in Zn(2+) binding. The [4Fe-4S] cluster site is built by Cys-557, Cys-560, and Cys-565. Residues 589-610 form a disordered region; that stretch reads ENIKRETSAEEAEEAREGMSDM.

The protein belongs to the ThiC family. As to quaternary structure, homodimer. Requires [4Fe-4S] cluster as cofactor.

It catalyses the reaction 5-amino-1-(5-phospho-beta-D-ribosyl)imidazole + S-adenosyl-L-methionine = 4-amino-2-methyl-5-(phosphooxymethyl)pyrimidine + CO + 5'-deoxyadenosine + formate + L-methionine + 3 H(+). It participates in cofactor biosynthesis; thiamine diphosphate biosynthesis. In terms of biological role, catalyzes the synthesis of the hydroxymethylpyrimidine phosphate (HMP-P) moiety of thiamine from aminoimidazole ribotide (AIR) in a radical S-adenosyl-L-methionine (SAM)-dependent reaction. This is Phosphomethylpyrimidine synthase from Erythrobacter litoralis (strain HTCC2594).